An 887-amino-acid chain; its full sequence is 3-hydroxy-3-methylglutaryl-coenzyme A reductase (887 aa).

Residues Met1–His9 lie on the Cytoplasmic side of the membrane. The chain crosses the membrane as a helical span at residues Gly10 to Gly39. Topologically, residues Asn40–Asp56 are lumenal. The helical transmembrane segment at Val57–Phe78 threads the bilayer. The SSD domain occupies Asp61–Leu218. An INSIG-binding motif motif is present at residues Tyr75–Phe78. The Cytoplasmic segment spans residues Gln79–Lys89. Lys89 is covalently cross-linked (Glycyl lysine isopeptide (Lys-Gly) (interchain with G-Cter in ubiquitin)). Residues Tyr90 to Leu114 traverse the membrane as a helical segment. The Lumenal segment spans residues Asp115 to Glu123. The helical transmembrane segment at Ala124–Ser149 threads the bilayer. The Cytoplasmic portion of the chain corresponds to Gln150–Arg159. Residues Gly160–Val187 form a helical membrane-spanning segment. The Lumenal portion of the chain corresponds to Arg188–Glu191. Residues Ile192 to Leu220 form a helical membrane-spanning segment. At Glu221–Lys248 the chain is on the cytoplasmic side. Residue Lys248 forms a Glycyl lysine isopeptide (Lys-Gly) (interchain with G-Cter in ubiquitin) linkage. A helical transmembrane segment spans residues Pro249–Ala275. At Asp276 to Lys314 the chain is on the lumenal side. Asn281 carries an N-linked (GlcNAc...) asparagine glycan. Residues Met315–Phe339 form a helical membrane-spanning segment. Residues Glu340–Ala887 are Cytoplasmic-facing. Active-site charge relay system residues include Glu558, Lys690, and Asp766. His865 serves as the catalytic Proton donor. The residue at position 871 (Ser871) is a Phosphoserine.

This sequence belongs to the HMG-CoA reductase family. Homotetramer. Homodimer. Interacts (via its SSD) with INSIG1; the interaction, accelerated by sterols, leads to the recruitment of HMGCR to AMFR/gp78 for its ubiquitination by the sterol-mediated ERAD pathway. Interacts with UBIAD1. Post-translationally, undergoes sterol-mediated ubiquitination and ER-associated degradation (ERAD). Accumulation of sterols in the endoplasmic reticulum (ER) membrane, triggers binding of the reductase to the ER membrane protein INSIG1 or INSIG2. The INSIG1 binding leads to the recruitment of the ubiquitin ligase, AMFR/gp78, RNF139 or RNF145, initiating ubiquitination of the reductase. The ubiquitinated reductase is then extracted from the ER membrane and delivered to cytosolic 26S proteosomes by a mechanism probably mediated by the ATPase Valosin-containing protein VCP/p97. The INSIG2-binding leads to the recruitment of the ubiquitin ligase RNF139, initiating ubiquitination of the reductase. Lys-248 is the main site of ubiquitination. Ubiquitination is enhanced by the presence of a geranylgeranylated protein. In terms of processing, N-glycosylated. Deglycosylated by NGLY1 on release from the endoplasmic reticulum (ER) in a sterol-mediated manner. Phosphorylated. Phosphorylation at Ser-871 reduces the catalytic activity.

The protein resides in the endoplasmic reticulum membrane. Its subcellular location is the peroxisome membrane. The catalysed reaction is (R)-mevalonate + 2 NADP(+) + CoA = (3S)-3-hydroxy-3-methylglutaryl-CoA + 2 NADPH + 2 H(+). The protein operates within metabolic intermediate biosynthesis; (R)-mevalonate biosynthesis; (R)-mevalonate from acetyl-CoA: step 3/3. Regulated by a negative feedback mechanism through sterols and non-sterol metabolites derived from mevalonate. Phosphorylation at Ser-871 down-regulates the catalytic activity. Its function is as follows. Catalyzes the conversion of (3S)-hydroxy-3-methylglutaryl-CoA (HMG-CoA) to mevalonic acid, the rate-limiting step in the synthesis of cholesterol and other isoprenoids, thus plays a critical role in cellular cholesterol homeostasis. This Mus musculus (Mouse) protein is 3-hydroxy-3-methylglutaryl-coenzyme A reductase (Hmgcr).